Here is a 231-residue protein sequence, read N- to C-terminus: Large ribosomal subunit protein uL1 (231 aa).

Belongs to the universal ribosomal protein uL1 family. As to quaternary structure, part of the 50S ribosomal subunit.

In terms of biological role, binds directly to 23S rRNA. The L1 stalk is quite mobile in the ribosome, and is involved in E site tRNA release. Protein L1 is also a translational repressor protein, it controls the translation of the L11 operon by binding to its mRNA. The protein is Large ribosomal subunit protein uL1 of Mycoplasmopsis agalactiae (strain NCTC 10123 / CIP 59.7 / PG2) (Mycoplasma agalactiae).